We begin with the raw amino-acid sequence, 582 residues long: uncharacterized protein (582 aa).

The next 6 membrane-spanning stretches (helical) occupy residues 17-37, 57-77, 131-151, 156-176, 239-259, and 271-291; these read VAML…LPTV, LGAV…GAVY, MTAT…IMAI, ALTW…YWII, ALML…LIWF, and VGSL…VLMA. The ABC transmembrane type-1 domain occupies 17-300; that stretch reads VAMLMMLQLV…ATMTLAVLPR (284 aa). The 237-residue stretch at 335–571 folds into the ABC transporter domain; that stretch reads VRLAGATFTY…CPTYAEFAAS (237 aa). 369–376 serves as a coordination point for ATP; the sequence is GSTGSGKS.

The protein belongs to the ABC transporter superfamily. MsbA family.

It is found in the cell membrane. This is an uncharacterized protein from Mycobacterium bovis (strain ATCC BAA-935 / AF2122/97).